The primary structure comprises 741 residues: Zinc finger and BTB domain-containing protein 20 (741 aa).

Residues 1-17 (MLERKKPKTAENQKASE) show a composition bias toward basic and acidic residues. The tract at residues 1 to 32 (MLERKKPKTAENQKASEENEITQPGGSSAKPG) is disordered. Positions 104–167 (CDVTVRIHGS…MYSGVLRVSQ (64 aa)) constitute a BTB domain. The interval 203–235 (GIQDSGQDTPRGTPESGTSGQSSDTESGYLQSH) is disordered. Residues 206-235 (DSGQDTPRGTPESGTSGQSSDTESGYLQSH) show a composition bias toward polar residues. Position 211 is a phosphothreonine (T211). K330 participates in a covalent cross-link: Glycyl lysine isopeptide (Lys-Gly) (interchain with G-Cter in SUMO1); alternate. A Glycyl lysine isopeptide (Lys-Gly) (interchain with G-Cter in SUMO2); alternate cross-link involves residue K330. The disordered stretch occupies residues 350–440 (RNESEECTED…SSPERSNEVE (91 aa)). S353 carries the phosphoserine modification. A compositionally biased stretch (acidic residues) spans 354 to 367 (EECTEDTDQAEGTE). Residue T357 is modified to Phosphothreonine. A Glycyl lysine isopeptide (Lys-Gly) (interchain with G-Cter in SUMO2) cross-link involves residue K371. Positions 404 to 423 (AEPTQPEQAAEAPAEGGPQT) are enriched in low complexity. The segment covering 424-434 (NQLETGASSPE) has biased composition (polar residues). 4 C2H2-type zinc fingers span residues 578–600 (YECTLCNKTFTAKQNYVKHMFVH), 606–628 (HQCSICWRSFSLKDYLIKHMVTH), 634–656 (YQCSICNKRFTQKSSLNVHMRLH), and 662–684 (YECYICKKKFSHKTLLERHVALH). A phosphothreonine mark is found at T690 and T695. The segment at 715-737 (YVCSVCPAKFDQIEQFNDHMRMH) adopts a C2H2-type 5 zinc-finger fold. K723 participates in a covalent cross-link: Glycyl lysine isopeptide (Lys-Gly) (interchain with G-Cter in SUMO2).

In terms of assembly, can homodimerize. Binds to DNA. In terms of processing, sumoylated with SUMO1. In terms of tissue distribution, expressed in spleen, lymph node, thymus, peripheral blood leukocytes, and fetal liver.

The protein localises to the nucleus. Its function is as follows. May be a transcription factor that may be involved in hematopoiesis, oncogenesis, and immune responses. Plays a role in postnatal myogenesis, may be involved in the regulation of satellite cells self-renewal. The chain is Zinc finger and BTB domain-containing protein 20 (ZBTB20) from Homo sapiens (Human).